A 710-amino-acid chain; its full sequence is Ribonuclease R (710 aa).

The 328-residue stretch at 246-573 folds into the RNB domain; the sequence is RKDLRDKVIV…VHRLLKLYLE (328 aa). The 81-residue stretch at 625–705 folds into the S1 motif domain; sequence GEVFNVVVTN…IRGEIDFVLV (81 aa).

The protein belongs to the RNR ribonuclease family. RNase R subfamily.

It is found in the cytoplasm. It carries out the reaction Exonucleolytic cleavage in the 3'- to 5'-direction to yield nucleoside 5'-phosphates.. Functionally, 3'-5' exoribonuclease that releases 5'-nucleoside monophosphates and is involved in maturation of structured RNAs. This chain is Ribonuclease R, found in Thermotoga maritima (strain ATCC 43589 / DSM 3109 / JCM 10099 / NBRC 100826 / MSB8).